We begin with the raw amino-acid sequence, 217 residues long: Proteasome subunit beta type-6-B like protein (217 aa).

A propeptide spans 1-16 (MERHFMDSQIKGVSTG) (removed in mature form). T17 functions as the Nucleophile in the catalytic mechanism.

This sequence belongs to the peptidase T1B family. In terms of assembly, the 26S proteasome consists of a 20S proteasome core and two 19S regulatory subunits. The 20S proteasome core is composed of 28 subunits that are arranged in four stacked rings, resulting in a barrel-shaped structure. The two end rings are each formed by seven alpha subunits, and the two central rings are each formed by seven beta subunits. The catalytic chamber with the active sites is on the inside of the barrel.

It localises to the cytoplasm. The protein resides in the nucleus. It carries out the reaction Cleavage of peptide bonds with very broad specificity.. Its function is as follows. The proteasome is a multicatalytic proteinase complex which is characterized by its ability to cleave peptides with Arg, Phe, Tyr, Leu, and Glu adjacent to the leaving group at neutral or slightly basic pH. The proteasome has an ATP-dependent proteolytic activity. This subunit is involved in antigen processing to generate class I binding peptides. In Salmo salar (Atlantic salmon), this protein is Proteasome subunit beta type-6-B like protein (psmb6l-b).